Reading from the N-terminus, the 193-residue chain is Cytidylate kinase (193 aa).

12 to 20 (GLAGSGTTT) is an ATP binding site.

The protein belongs to the cytidylate kinase family. Type 2 subfamily.

The protein resides in the cytoplasm. It catalyses the reaction CMP + ATP = CDP + ADP. It carries out the reaction dCMP + ATP = dCDP + ADP. The polypeptide is Cytidylate kinase (Thermococcus sibiricus (strain DSM 12597 / MM 739)).